The chain runs to 609 residues: Mitochondrial nucleoid-associated protein 1 (609 aa).

Over 1 to 554 the chain is Extracellular; it reads MSDNPPRMEV…CNTTIRKSGF (554 aa). Disordered regions lie at residues 133-163 and 406-425; these read QEET…GESR and SPEG…QASH. Residues 146-161 show a composition bias toward basic and acidic residues; the sequence is TSPKRELAEDLPKSGE. A helical transmembrane segment spans residues 555 to 571; sequence GGITMLSTGYFVLCCSW. The Cytoplasmic portion of the chain corresponds to 572–609; it reads SFRRLKKLCRPLPWKSTVPPSVGVAKTTGDCRSKTCLD.

It localises to the mitochondrion inner membrane. The protein localises to the mitochondrion matrix. The protein resides in the mitochondrion nucleoid. Functionally, critical regulator of mitochondrial DNA (mtDNA) abundance. Binds dsDNA throughout the mitochondrial genome without sequence specificity and controls mtDNA copy number by promoting its replication. Also plays important roles in mitochondrial metabolism and cell proliferation. The chain is Mitochondrial nucleoid-associated protein 1 from Pongo abelii (Sumatran orangutan).